We begin with the raw amino-acid sequence, 221 residues long: Vesicle-associated membrane protein 722 (221 aa).

Residues 1 to 196 are Cytoplasmic-facing; it reads MAQQSLIYSF…MWFQNMKIKL (196 aa). The Longin domain occupies 10 to 114; the sequence is FVARGTVILV…SLNKEFGSKL (105 aa). The v-SNARE coiled-coil homology domain maps to 130-190; it reads KLAKVKAQVS…TQMRRKMWFQ (61 aa). Residues 197–217 traverse the membrane as a helical; Anchor for type IV membrane protein segment; it reads IVLAIIIALILIIILSICGGF. Topologically, residues 218-221 are vesicular; it reads NCGK.

The protein belongs to the synaptobrevin family. As to expression, highly expressed in stems and roots. Detected in flowers and leaves.

The protein localises to the cell membrane. It is found in the early endosome membrane. Involved in the targeting and/or fusion of transport vesicles to their target membrane. The sequence is that of Vesicle-associated membrane protein 722 from Arabidopsis thaliana (Mouse-ear cress).